We begin with the raw amino-acid sequence, 189 residues long: dCTP deaminase (189 aa).

Residues 112-117 (KSTYAR), 136-138 (TLE), Gln-157, Tyr-171, and Gln-181 contribute to the dCTP site. The active-site Proton donor/acceptor is the Glu-138.

Belongs to the dCTP deaminase family. In terms of assembly, homotrimer.

It catalyses the reaction dCTP + H2O + H(+) = dUTP + NH4(+). It participates in pyrimidine metabolism; dUMP biosynthesis; dUMP from dCTP (dUTP route): step 1/2. Its function is as follows. Catalyzes the deamination of dCTP to dUTP. The chain is dCTP deaminase from Albidiferax ferrireducens (strain ATCC BAA-621 / DSM 15236 / T118) (Rhodoferax ferrireducens).